A 477-amino-acid chain; its full sequence is Proton-coupled amino acid transporter 3 (477 aa).

Basic and acidic residues predominate over residues methionine 1–cysteine 13. Residues methionine 1–lysine 42 form a disordered region. Over methionine 1–glutamine 54 the chain is Cytoplasmic. A compositionally biased stretch (low complexity) spans glycine 19–serine 38. A helical transmembrane segment spans residues isoleucine 55–valine 75. The Extracellular segment spans residues lysine 76–asparagine 77. A helical transmembrane segment spans residues alanine 78–methionine 98. Over aspartate 99–tyrosine 144 the chain is Cytoplasmic. Residues valine 145–methionine 165 traverse the membrane as a helical segment. The Extracellular portion of the chain corresponds to alanine 166–leucine 202. A helical transmembrane segment spans residues threonine 203–phenylalanine 223. Topologically, residues serine 224 to threonine 225 are cytoplasmic. Residues leucine 226–proline 246 form a helical membrane-spanning segment. Residues histidine 247–threonine 259 are Extracellular-facing. A helical transmembrane segment spans residues phenylalanine 260–leucine 280. Topologically, residues lysine 281–proline 291 are cytoplasmic. Residues alanine 292–glycine 312 form a helical membrane-spanning segment. Residues tyrosine 313–glycine 344 lie on the Extracellular side of the membrane. A helical membrane pass occupies residues isoleucine 345–valine 365. The Cytoplasmic portion of the chain corresponds to serine 366 to leucine 374. The helical transmembrane segment at phenylalanine 375–isoleucine 395 threads the bilayer. The Extracellular portion of the chain corresponds to proline 396 to aspartate 399. Residues leucine 400–leucine 420 traverse the membrane as a helical segment. Residues leucine 421–aspartate 439 are Cytoplasmic-facing. The helical transmembrane segment at isoleucine 440 to glutamate 460 threads the bilayer. At methionine 461–threonine 477 the chain is on the extracellular side.

Belongs to the amino acid/polyamine transporter 2 family.

It is found in the membrane. The sequence is that of Proton-coupled amino acid transporter 3 (Slc36a3) from Rattus norvegicus (Rat).